The primary structure comprises 828 residues: Periplasmic nitrate reductase (828 aa).

Positions 1-31 form a signal peptide, tat-type signal; the sequence is MKLSRRSFMKANAVAAAAAAAGLSVPGVARA. Positions 39–95 constitute a 4Fe-4S Mo/W bis-MGD-type domain; that stretch reads IKWDKAPCRFCGTGCGVLVGTQQGRIVACQGDPDAPVNRGLNCIKGYFLPKIMYGKD. [4Fe-4S] cluster-binding residues include Cys46, Cys49, Cys53, and Cys81. Mo-bis(molybdopterin guanine dinucleotide) contacts are provided by residues Lys83, Gln150, Asn175, Cys179, 212–219, 243–247, 262–264, Met372, Gln376, Asn482, 508–509, Lys531, Asp558, and 718–727; these read WGSNMAEM, STFQH, QSD, SD, and TGRVLEHWHT. Substrate is bound at residue Phe794. Mo-bis(molybdopterin guanine dinucleotide)-binding residues include Asn802 and Lys819.

This sequence belongs to the prokaryotic molybdopterin-containing oxidoreductase family. NasA/NapA/NarB subfamily. As to quaternary structure, component of the periplasmic nitrate reductase NapAB complex composed of NapA and NapB. It depends on [4Fe-4S] cluster as a cofactor. Mo-bis(molybdopterin guanine dinucleotide) is required as a cofactor. Predicted to be exported by the Tat system. The position of the signal peptide cleavage has not been experimentally proven.

The protein localises to the periplasm. It catalyses the reaction 2 Fe(II)-[cytochrome] + nitrate + 2 H(+) = 2 Fe(III)-[cytochrome] + nitrite + H2O. In terms of biological role, catalytic subunit of the periplasmic nitrate reductase complex NapAB. Receives electrons from NapB and catalyzes the reduction of nitrate to nitrite. This Citrobacter koseri (strain ATCC BAA-895 / CDC 4225-83 / SGSC4696) protein is Periplasmic nitrate reductase.